The chain runs to 307 residues: Thiohydrolase apmlB (307 aa).

Belongs to the polyketide transferase af380 family.

In terms of biological role, thiohydrolase; part of the gene cluster that mediates the biosynthesis of phaeospelide A, a fungal polyene macrolide with a 34-membered macrolactone ring and an all-trans conjugated hexaene structure. The HR-PKS ApmlA uses acetyl-CoA and malonyl-CoA as its starter and extender units, respectively, and provides the large carbon framework in phaeospelide via 16 cycles of polyketide chain elongation, which is the largest number identified in fungal iterative PKSs thus far. During round 1, the KR domain reduces beta -ketone to an L-oriented hydroxy group, while during later rounds, it provides hydroxy groups in the D-configuration. The characteristic conjugated hexaene moiety is built during the later rounds (10-15), when the KR and DH domains are at work but ER is off. Phylogenetic analysis of the DH domain suggests that a polyene formation is programmed in the DH domain. Finally, the mature ACP-tethered carbon chain is transferred to the serine residue of the thiohydrolase apmlB, followed by intramolecular macrolactonization, generating phaeospelide A. When one elongation cycle during rounds 7-9 is skipped, phaeospelide B is biosynthesized instead. The protein is Thiohydrolase apmlB of Arthrinium phaeospermum (Gymnosporium phaeospermum).